The chain runs to 32 residues: Alpha-amylase inhibitor AAI (32 aa).

3 disulfides stabilise this stretch: C1-C18, C8-C23, and C17-C31.

As to expression, endosperm.

In terms of biological role, alpha-amylase inhibitor. It is active against alpha-amylases from Tribolium castaneum and Prostephanus truncatus larvae. This Amaranthus hypochondriacus (Prince-of-Wales feather) protein is Alpha-amylase inhibitor AAI (AAI).